Reading from the N-terminus, the 247-residue chain is Segregation and condensation protein A (247 aa).

The protein belongs to the ScpA family. Component of a cohesin-like complex composed of ScpA, ScpB and the Smc homodimer, in which ScpA and ScpB bind to the head domain of Smc. The presence of the three proteins is required for the association of the complex with DNA.

The protein resides in the cytoplasm. Its function is as follows. Participates in chromosomal partition during cell division. May act via the formation of a condensin-like complex containing Smc and ScpB that pull DNA away from mid-cell into both cell halves. The protein is Segregation and condensation protein A of Bacillus cereus (strain ATCC 10987 / NRS 248).